Reading from the N-terminus, the 341-residue chain is MNTATQAPKDSADSATERFRYGFLKGNPQLTKNGELKHLLSIEGLPKAIVNHILDTADQFVSVTDREVKKVPLLRGKSVFNLFFENSTRTRTTFEIAATRLSADVLNLNINASSTSKGESLLDTINNLSAMHADMFVVRHASSGAPYLIAQHCAPHVHVINAGDGRHAHPTQGLLDMYTIRHYKKDFTKLRVAIVGDILHSRVARSDIHALTTLGVPEVRAIGPRTLLPGGLEQMGVRVFHNLDEGLKDVDVIIMLRLQNERMSGALLPSAQEYFKSWGLTPERLALAAPEAIVMHPGPMNRGVEIDSQVADGPQSVILNQVTFGIAVRMAVMGIVAGNHD.

The carbamoyl phosphate site is built by Arg89 and Thr90. Lys117 lines the L-aspartate pocket. 3 residues coordinate carbamoyl phosphate: Arg139, His169, and Gln172. The L-aspartate site is built by Arg202 and Arg257. Gly298 and Pro299 together coordinate carbamoyl phosphate.

It belongs to the aspartate/ornithine carbamoyltransferase superfamily. ATCase family. Heterododecamer (2C3:3R2) of six catalytic PyrB chains organized as two trimers (C3), and six regulatory PyrI chains organized as three dimers (R2).

The catalysed reaction is carbamoyl phosphate + L-aspartate = N-carbamoyl-L-aspartate + phosphate + H(+). It functions in the pathway pyrimidine metabolism; UMP biosynthesis via de novo pathway; (S)-dihydroorotate from bicarbonate: step 2/3. In terms of biological role, catalyzes the condensation of carbamoyl phosphate and aspartate to form carbamoyl aspartate and inorganic phosphate, the committed step in the de novo pyrimidine nucleotide biosynthesis pathway. The protein is Aspartate carbamoyltransferase catalytic subunit of Paraburkholderia xenovorans (strain LB400).